We begin with the raw amino-acid sequence, 146 residues long: Ribonuclease P protein component (146 aa).

It belongs to the RnpA family. As to quaternary structure, consists of a catalytic RNA component (M1 or rnpB) and a protein subunit.

The catalysed reaction is Endonucleolytic cleavage of RNA, removing 5'-extranucleotides from tRNA precursor.. Functionally, RNaseP catalyzes the removal of the 5'-leader sequence from pre-tRNA to produce the mature 5'-terminus. It can also cleave other RNA substrates such as 4.5S RNA. The protein component plays an auxiliary but essential role in vivo by binding to the 5'-leader sequence and broadening the substrate specificity of the ribozyme. In Chlorobium phaeobacteroides (strain DSM 266 / SMG 266 / 2430), this protein is Ribonuclease P protein component.